The chain runs to 240 residues: NAD(P)H-quinone oxidoreductase subunit K (240 aa).

C55, C56, C120, and C151 together coordinate [4Fe-4S] cluster.

It belongs to the complex I 20 kDa subunit family. In terms of assembly, NDH-1 can be composed of about 15 different subunits; different subcomplexes with different compositions have been identified which probably have different functions. It depends on [4Fe-4S] cluster as a cofactor.

Its subcellular location is the cellular thylakoid membrane. The enzyme catalyses a plastoquinone + NADH + (n+1) H(+)(in) = a plastoquinol + NAD(+) + n H(+)(out). It catalyses the reaction a plastoquinone + NADPH + (n+1) H(+)(in) = a plastoquinol + NADP(+) + n H(+)(out). Its function is as follows. NDH-1 shuttles electrons from an unknown electron donor, via FMN and iron-sulfur (Fe-S) centers, to quinones in the respiratory and/or the photosynthetic chain. The immediate electron acceptor for the enzyme in this species is believed to be plastoquinone. Couples the redox reaction to proton translocation, and thus conserves the redox energy in a proton gradient. Cyanobacterial NDH-1 also plays a role in inorganic carbon-concentration. In Trichodesmium erythraeum (strain IMS101), this protein is NAD(P)H-quinone oxidoreductase subunit K.